A 551-amino-acid chain; its full sequence is Bestrophin-1 (551 aa).

Residues 1 to 31 (MTITYTNKVANARLGSFSSLLLCWRGSIYKL) lie on the Cytoplasmic side of the membrane. Position 10 (A10) interacts with Ca(2+). The helical transmembrane segment at 32-51 (LYGEFLVFIFLYYSIRGLYR) threads the bilayer. Over 52–60 (MVLSSDQQL) the chain is Extracellular. The helical transmembrane segment at 61–82 (LFEKLALYCDSYIQLIPISFVL) threads the bilayer. At 83–237 (GFYVTLVVSR…DWISIPLVYT (155 aa)) the chain is on the cytoplasmic side. The helical transmembrane segment at 238–255 (QVVTVAVYSFFLACLIGR) threads the bilayer. At 256–274 (QFLNPNKDYPGHEMDLVVP) the chain is on the extracellular side. Residues 275 to 288 (VFTILQFLFYMGWL) form a helical membrane-spanning segment. At 289–551 (KVAEQLINPF…EAGTKPVLYE (263 aa)) the chain is on the cytoplasmic side. Residues Q293, N296, D301, and D304 each coordinate Ca(2+). Positions 346–379 (PYTAASARSRRHSFMGSTFNISLKKEDLELWSKE) are auto-inhibitory segment. Positions 459–489 (SHCGPQAPSSHPTEQSAPSSSDTGDGPSTDY) are disordered. Residues 465 to 475 (APSSHPTEQSA) show a composition bias toward polar residues. A compositionally biased stretch (low complexity) spans 476–488 (PSSSDTGDGPSTD).

Belongs to the anion channel-forming bestrophin (TC 1.A.46) family. Calcium-sensitive chloride channel subfamily. In terms of assembly, interacts with YWHAG; this interaction promotes the ligand-gated L-glutamate channel activity leading to the positive regulation of NMDA glutamate receptor activity through the L-glutamate secretion.

It is found in the cell membrane. Its subcellular location is the basolateral cell membrane. The enzyme catalyses 4-aminobutanoate(in) = 4-aminobutanoate(out). The catalysed reaction is L-glutamate(out) = L-glutamate(in). It catalyses the reaction chloride(in) = chloride(out). It carries out the reaction hydrogencarbonate(in) = hydrogencarbonate(out). The enzyme catalyses D-serine(in) = D-serine(out). Inactivated by sulfhydryl-reactive agents. Ligand-gated anion channel that allows the movement of anions across cell membranes when activated by calcium (Ca2+). Allows the movement of chloride and hydrogencarbonate. Found in a partially open conformation leading to significantly smaller chloride movement. Upon F2R/PAR-1 activation, the sequestered calcium is released into the cytosol of astrocytes, leading to the (Ca2+)-dependent release of L-glutamate into the synaptic cleft that targets the neuronal postsynaptic GRIN2A/NMDAR receptor resulting in the synaptic plasticity regulation. Upon activation of the norepinephrine-alpha-1 adrenergic receptor signaling pathway, transports as well D-serine than L-glutamate in a (Ca2+)-dependent manner, leading to activation of adjacent NMDAR receptors and therefore regulates the heterosynaptic long-term depression and metaplasticity during initial memory acquisition. Releases the 4-aminobutanoate neurotransmitter in a (Ca2+)-dependent manner, and participates in its tonic release from cerebellar glial cells. The chain is Bestrophin-1 from Mus musculus (Mouse).